Consider the following 157-residue polypeptide: Monooxygenase CPUR_05417 (157 aa).

The protein belongs to the avfA family.

It participates in secondary metabolite biosynthesis. Monooxygenase; part of the ergochrome gene cluster responsible for the typical purple-black color of the ergot sclerotia. The ergochrome gene cluster produces several ergot pigments including the yellow ergochrome secalonic acid and its derivatives, as well as the red anthraquinones endocrocin and clavorubin. The pathway begins with the synthesis of atrochrysone thioester by the polyketide synthase (PKS) CPUR_05437. The atrochrysone carboxyl ACP thioesterase CPUR_05436 then breaks the thioester bond and releases the atrochrysone carboxylic acid from CPUR_05437. The atrochrysone carboxylic acid is then converted to atrochrysone which is further transformed into emodin anthrone. The next step is performed by the anthrone oxygenase CPUR_05434 that catalyzes the oxidation of emodinanthrone to emodin. Emodin is further modified to yield monodictyphenone via several steps involving CPUR_05427, CPUR_05428, CPUR_05429 and CPUR_05430. The short chain dehydrogenase/reductase CPUR_05418 then catalyzes the C-5 ketoreduction to give the xanthone skeleton of the monomeric units. Ergochromes formation requires further dimerization steps of different xanthone units, probably catalyzed by the cytochrome P450 monooxygenase CPUR_05419. CPUR_05425, CPUR_05426 and CPUR_05431 are unique to Claviceps, thus it is likely that they are involved in further modification of xanthone units or in their dimerization. The yellow ergochromes and the red anthraquinone pigments endocrocin and clavorubin are products from the same PKS derived precursors and the latter are likely shunt products in the pathway of xanthone biosynthesis. It is proposed that atrochrysone carboxylic acid released from the PKS CPUR_05437 can also be converted to endocrocin anthrone which is further oxidized into endocrocin by CPUR_05435. Endocrocin could be then modified to clavorubin, possibly by CPUR_05423 and CPUR_05431. Clavorubin is the principal anthraquinone metabolite produced by the cluster with a much higher yield compared to endocrocin. The sequence is that of Monooxygenase CPUR_05417 from Claviceps purpurea (strain 20.1) (Ergot fungus).